Here is a 210-residue protein sequence, read N- to C-terminus: Large ribosomal subunit protein uL3 (210 aa).

This sequence belongs to the universal ribosomal protein uL3 family. Part of the 50S ribosomal subunit. Forms a cluster with proteins L14 and L19.

Its function is as follows. One of the primary rRNA binding proteins, it binds directly near the 3'-end of the 23S rRNA, where it nucleates assembly of the 50S subunit. This Syntrophotalea carbinolica (strain DSM 2380 / NBRC 103641 / GraBd1) (Pelobacter carbinolicus) protein is Large ribosomal subunit protein uL3.